The following is a 1216-amino-acid chain: Tyrosine-protein kinase receptor ver-4 (1216 aa).

The Extracellular portion of the chain corresponds to 1–789; that stretch reads MRVSLTEFLV…VKVAGASSSS (789 aa). 16 N-linked (GlcNAc...) asparagine glycosylation sites follow: Asn-142, Asn-195, Asn-206, Asn-245, Asn-283, Asn-333, Asn-348, Asn-384, Asn-402, Asn-412, Asn-496, Asn-508, Asn-588, Asn-599, Asn-664, and Asn-703. 2 Ig-like C2-type domains span residues 596–691 and 697–783; these read KSVN…TSIS and PPFL…VKVA. The cysteines at positions 619 and 675 are disulfide-linked. Residues Cys-721 and Cys-765 are joined by a disulfide bond. A helical membrane pass occupies residues 790 to 810; that stretch reads FFWLFITFFAFVVVGIVVSLL. Residues 811-1216 lie on the Cytoplasmic side of the membrane; the sequence is WKLFGQKDLK…WVQKPTQLFF (406 aa). Residues 870 to 1181 enclose the Protein kinase domain; it reads LEILETLGSG…IKLFKNHIQY (312 aa). Residues 876–884 and Lys-908 each bind ATP; that span reads LGSGQFGIV. The Proton acceptor role is filled by Asp-1042.

The protein belongs to the protein kinase superfamily. Tyr protein kinase family.

It is found in the cell membrane. The enzyme catalyses L-tyrosyl-[protein] + ATP = O-phospho-L-tyrosyl-[protein] + ADP + H(+). Receptor tyrosine kinase which may be involved, downstream of pvf-1, in the positioning of ray 1, the most anterior ray sensillum in the male tail. The polypeptide is Tyrosine-protein kinase receptor ver-4 (Caenorhabditis elegans).